The following is a 179-amino-acid chain: ADP-ribosylation factor 1-like 1 (179 aa).

Glycine 2 carries the N-myristoyl glycine lipid modification. The segment at 3 to 16 (LFFSKISSFMFPNI) is important for the stable binding to the membranes. GTP-binding positions include 24–32 (GLDGAGKTT), 126–129 (NKQD), and alanine 160.

The protein belongs to the small GTPase superfamily. Arf family.

The protein resides in the golgi apparatus membrane. The catalysed reaction is GTP + H2O = GDP + phosphate + H(+). With respect to regulation, alternates between an inactive GDP-bound form and an active GTP-bound form. Activated by a guanine nucleotide-exchange factor (GEF) and inactivated by GTPase-activating protein (GAP). Functionally, small GTPase involved in protein trafficking between different compartments. Modulates vesicle budding and uncoating within the Golgi complex. In its GTP-bound form, triggers the recruitment of coatomer proteins to the Golgi membrane. The hydrolysis of ARF1-bound GTP, which is mediated by ARFGAPs proteins, is required for dissociation of coat proteins from Golgi membranes and vesicles. The chain is ADP-ribosylation factor 1-like 1 (arf-1.1) from Caenorhabditis elegans.